A 129-amino-acid polypeptide reads, in one-letter code: MAQNKTIAVALLLATLVAVMGKEPETLEEAVRAGCKEECSEQKKKAPIDEKQCEDFCFIKTKSIFEAHKGVKDLKADRFIDFCNNECNAVYKEDPATSKKCAESCEADAKEAEVFLDKVVAYIQTTKQA.

Positions 1–21 (MAQNKTIAVALLLATLVAVMG) are cleaved as a signal peptide.

This is an uncharacterized protein from Oryza sativa subsp. japonica (Rice).